Here is a 308-residue protein sequence, read N- to C-terminus: UDP-N-acetylenolpyruvoylglucosamine reductase (308 aa).

The FAD-binding PCMH-type domain occupies 35 to 200 (RVGGPAQVLF…TSARFRGEPM (166 aa)). Arginine 180 is an active-site residue. Over residues 211 to 226 (EVQRHRETAQPVREKT) the composition is skewed to basic and acidic residues. The disordered stretch occupies residues 211 to 236 (EVQRHRETAQPVREKTGGSTFKNPPG). The active-site Proton donor is the serine 229. The active site involves glutamate 299.

It belongs to the MurB family. FAD serves as cofactor.

It is found in the cytoplasm. It catalyses the reaction UDP-N-acetyl-alpha-D-muramate + NADP(+) = UDP-N-acetyl-3-O-(1-carboxyvinyl)-alpha-D-glucosamine + NADPH + H(+). Its pathway is cell wall biogenesis; peptidoglycan biosynthesis. Functionally, cell wall formation. The polypeptide is UDP-N-acetylenolpyruvoylglucosamine reductase (Rhodopseudomonas palustris (strain BisB18)).